Consider the following 224-residue polypeptide: Cytidylate kinase (224 aa).

Residue 11–19 (GPAGAGKST) coordinates ATP.

Belongs to the cytidylate kinase family. Type 1 subfamily.

The protein resides in the cytoplasm. The enzyme catalyses CMP + ATP = CDP + ADP. The catalysed reaction is dCMP + ATP = dCDP + ADP. The protein is Cytidylate kinase of Lysinibacillus sphaericus (strain C3-41).